A 246-amino-acid chain; its full sequence is Transcription factor MYB113 (246 aa).

HTH myb-type domains follow at residues 5–61 (PKGL…KPSI) and 62–112 (KRGK…SKKH). 2 DNA-binding regions (H-T-H motif) span residues 33 to 57 (WHRVPLRTGLNRCRKSCRLRWLNYL) and 85 to 108 (WSLIAGRLPGRTANDVKNYWNTHL).

As to quaternary structure, interacts with BHLH002/EGL3/MYC146, BHLH012/MYC1 and BHLH042/TT8.

It is found in the nucleus. Its function is as follows. Transcription activator, when associated with BHLH002/EGL3/MYC146, BHLH012/MYC1, or BHLH042/TT8. This chain is Transcription factor MYB113 (MYB113), found in Arabidopsis thaliana (Mouse-ear cress).